Reading from the N-terminus, the 353-residue chain is Photosystem II D2 protein (353 aa).

Thr-2 is subject to N-acetylthreonine. A Phosphothreonine modification is found at Thr-2. The helical transmembrane segment at Cys-41–Thr-61 threads the bilayer. His-118 is a binding site for chlorophyll a. A helical membrane pass occupies residues Gly-125–Pro-141. Pheophytin a contacts are provided by Gln-130 and Asn-143. The helical transmembrane segment at Val-153–Ser-166 threads the bilayer. His-198 serves as a coordination point for chlorophyll a. Residues Ala-208 to Asp-228 traverse the membrane as a helical segment. Residues His-215 and Phe-262 each coordinate a plastoquinone. Fe cation is bound at residue His-215. His-269 lines the Fe cation pocket. A helical membrane pass occupies residues Gly-279–Arg-295.

Belongs to the reaction center PufL/M/PsbA/D family. As to quaternary structure, PSII is composed of 1 copy each of membrane proteins PsbA, PsbB, PsbC, PsbD, PsbE, PsbF, PsbH, PsbI, PsbJ, PsbK, PsbL, PsbM, PsbT, PsbX, PsbY, PsbZ, Psb30/Ycf12, at least 3 peripheral proteins of the oxygen-evolving complex and a large number of cofactors. It forms dimeric complexes. The D1/D2 heterodimer binds P680, chlorophylls that are the primary electron donor of PSII, and subsequent electron acceptors. It shares a non-heme iron and each subunit binds pheophytin, quinone, additional chlorophylls, carotenoids and lipids. There is also a Cl(-1) ion associated with D1 and D2, which is required for oxygen evolution. The PSII complex binds additional chlorophylls, carotenoids and specific lipids. serves as cofactor.

The protein resides in the plastid. Its subcellular location is the chloroplast thylakoid membrane. The catalysed reaction is 2 a plastoquinone + 4 hnu + 2 H2O = 2 a plastoquinol + O2. Its function is as follows. Photosystem II (PSII) is a light-driven water:plastoquinone oxidoreductase that uses light energy to abstract electrons from H(2)O, generating O(2) and a proton gradient subsequently used for ATP formation. It consists of a core antenna complex that captures photons, and an electron transfer chain that converts photonic excitation into a charge separation. The D1/D2 (PsbA/PsbD) reaction center heterodimer binds P680, the primary electron donor of PSII as well as several subsequent electron acceptors. D2 is needed for assembly of a stable PSII complex. This chain is Photosystem II D2 protein, found in Lactuca sativa (Garden lettuce).